The primary structure comprises 648 residues: Macrolide export ATP-binding/permease protein MacB (648 aa).

In terms of domain architecture, ABC transporter spans 5–243 (LELCNVSRSY…QGVDAAVVNT (239 aa)). 41–48 (GVSGSGKS) serves as a coordination point for ATP. 5 consecutive transmembrane segments (helical) span residues 273–293 (LLTM…VVVG), 417–437 (ANVV…IGVA), 523–543 (LFLT…VMNI), 577–597 (VLVC…IAFM), and 611–631 (LTAL…FGWL).

This sequence belongs to the ABC transporter superfamily. Macrolide exporter (TC 3.A.1.122) family. Homodimer. Part of the tripartite efflux system MacAB-TolC, which is composed of an inner membrane transporter, MacB, a periplasmic membrane fusion protein, MacA, and an outer membrane component, TolC. The complex forms a large protein conduit and can translocate molecules across both the inner and outer membranes. Interacts with MacA.

The protein localises to the cell inner membrane. Functionally, part of the tripartite efflux system MacAB-TolC. MacB is a non-canonical ABC transporter that contains transmembrane domains (TMD), which form a pore in the inner membrane, and an ATP-binding domain (NBD), which is responsible for energy generation. Confers resistance against macrolides. This is Macrolide export ATP-binding/permease protein MacB from Salmonella choleraesuis (strain SC-B67).